The following is a 337-amino-acid chain: Ferredoxin--NADP reductase (337 aa).

7 residues coordinate FAD: glutamate 42, glutamine 50, tyrosine 55, valine 97, phenylalanine 130, aspartate 292, and threonine 333.

It belongs to the ferredoxin--NADP reductase type 2 family. Homodimer. The cofactor is FAD.

The enzyme catalyses 2 reduced [2Fe-2S]-[ferredoxin] + NADP(+) + H(+) = 2 oxidized [2Fe-2S]-[ferredoxin] + NADPH. The chain is Ferredoxin--NADP reductase from Streptococcus mutans serotype c (strain ATCC 700610 / UA159).